The sequence spans 662 residues: LIM domain kinase 1 (662 aa).

LIM zinc-binding domains follow at residues Pro24–Glu83 and Leu84–Thr145. The PDZ domain maps to Leu166–Pro259. Residues Pro262 to Ser328 are disordered. Pro residues predominate over residues Ser272–Ala287. Over residues Ser309–Ser320 the composition is skewed to low complexity. The region spanning Leu346–Leu611 is the Protein kinase domain. Residues Leu352–Ala360 and Lys375 contribute to the ATP site. Asp467 is a catalytic residue.

Belongs to the protein kinase superfamily. TKL Ser/Thr protein kinase family. Expressed predominantly in the brain.

Its subcellular location is the cytoplasm. It is found in the nucleus. The protein localises to the cytoskeleton. It localises to the cell projection. The protein resides in the growth cone. It catalyses the reaction L-seryl-[protein] + ATP = O-phospho-L-seryl-[protein] + ADP + H(+). The catalysed reaction is L-threonyl-[protein] + ATP = O-phospho-L-threonyl-[protein] + ADP + H(+). Functionally, protein kinase which regulates actin filament dynamics. Phosphorylates and inactivates the actin binding/depolymerizing factor cofilin, thereby stabilizing the actin cytoskeleton. Required for motility of the axon growth cone. This chain is LIM domain kinase 1 (LIMK1), found in Gallus gallus (Chicken).